Reading from the N-terminus, the 88-residue chain is Sec-independent protein translocase protein TatA (88 aa).

Residues 1-21 (MGGISIWQLLIIALIVVLLFG) traverse the membrane as a helical segment. Residues 43–88 (MSSEEDKKALEDAEAAKPVQTAQTVQSAQPTQQATEKKPESNKEQA) form a disordered region. The span at 46 to 57 (EEDKKALEDAEA) shows a compositional bias: basic and acidic residues. A compositionally biased stretch (polar residues) spans 62 to 76 (QTAQTVQSAQPTQQA). Basic and acidic residues predominate over residues 77 to 88 (TEKKPESNKEQA).

Belongs to the TatA/E family. As to quaternary structure, the Tat system comprises two distinct complexes: a TatABC complex, containing multiple copies of TatA, TatB and TatC subunits, and a separate TatA complex, containing only TatA subunits. Substrates initially bind to the TatABC complex, which probably triggers association of the separate TatA complex to form the active translocon.

Its subcellular location is the cell inner membrane. In terms of biological role, part of the twin-arginine translocation (Tat) system that transports large folded proteins containing a characteristic twin-arginine motif in their signal peptide across membranes. TatA could form the protein-conducting channel of the Tat system. This is Sec-independent protein translocase protein TatA from Shewanella oneidensis (strain ATCC 700550 / JCM 31522 / CIP 106686 / LMG 19005 / NCIMB 14063 / MR-1).